The sequence spans 520 residues: GMP synthase [glutamine-hydrolyzing] (520 aa).

The region spanning 12–205 (KIIVLDYGSQ…AISICGARGD (194 aa)) is the Glutamine amidotransferase type-1 domain. Cys89 functions as the Nucleophile in the catalytic mechanism. Residues His179 and Glu181 contribute to the active site. Positions 206-395 (WSMDNFIDME…LGMPDEVVWR (190 aa)) constitute a GMPS ATP-PPase domain. An ATP-binding site is contributed by 233-239 (SGGVDSS).

As to quaternary structure, homodimer.

The catalysed reaction is XMP + L-glutamine + ATP + H2O = GMP + L-glutamate + AMP + diphosphate + 2 H(+). Its pathway is purine metabolism; GMP biosynthesis; GMP from XMP (L-Gln route): step 1/1. Catalyzes the synthesis of GMP from XMP. The polypeptide is GMP synthase [glutamine-hydrolyzing] (Streptococcus equi subsp. zooepidemicus (strain H70)).